A 250-amino-acid polypeptide reads, in one-letter code: 3-deoxy-manno-octulosonate cytidylyltransferase (250 aa).

The protein belongs to the KdsB family.

It localises to the cytoplasm. It carries out the reaction 3-deoxy-alpha-D-manno-oct-2-ulosonate + CTP = CMP-3-deoxy-beta-D-manno-octulosonate + diphosphate. It functions in the pathway nucleotide-sugar biosynthesis; CMP-3-deoxy-D-manno-octulosonate biosynthesis; CMP-3-deoxy-D-manno-octulosonate from 3-deoxy-D-manno-octulosonate and CTP: step 1/1. The protein operates within bacterial outer membrane biogenesis; lipopolysaccharide biosynthesis. In terms of biological role, activates KDO (a required 8-carbon sugar) for incorporation into bacterial lipopolysaccharide in Gram-negative bacteria. This Geobacter sulfurreducens (strain ATCC 51573 / DSM 12127 / PCA) protein is 3-deoxy-manno-octulosonate cytidylyltransferase.